Consider the following 335-residue polypeptide: Fructose-1,6-bisphosphatase class 1 (335 aa).

Mg(2+)-binding residues include Glu92, Asp114, Leu116, and Asp117. Substrate is bound by residues 117 to 120 (DGSS), Asn209, and Lys275. Residue Glu281 coordinates Mg(2+).

It belongs to the FBPase class 1 family. In terms of assembly, homotetramer. Mg(2+) is required as a cofactor.

The protein resides in the cytoplasm. The enzyme catalyses beta-D-fructose 1,6-bisphosphate + H2O = beta-D-fructose 6-phosphate + phosphate. Its pathway is carbohydrate biosynthesis; gluconeogenesis. The sequence is that of Fructose-1,6-bisphosphatase class 1 from Paracidovorax citrulli (strain AAC00-1) (Acidovorax citrulli).